Reading from the N-terminus, the 247-residue chain is C-X-C motif chemokine 16 (247 aa).

The first 26 residues, Met1–Gly26, serve as a signal peptide directing secretion. At Asn27–Ala198 the chain is on the extracellular side. Disulfide bonds link Cys35–Cys65 and Cys37–Cys79. The disordered stretch occupies residues Ile120–Leu152. Over residues Thr131–Ser147 the composition is skewed to low complexity. Residues Leu199–Val219 form a helical membrane-spanning segment. At Leu220–Leu247 the chain is on the cytoplasmic side.

Belongs to the intercrine alpha (chemokine CxC) family. In terms of processing, glycosylated.

Its subcellular location is the membrane. Induces a strong chemotactic response. Induces calcium mobilization. Binds to CXCR6/Bonzo. Also acts as a scavenger receptor on macrophages, which specifically binds to OxLDL (oxidized low density lipoprotein), suggesting that it may be involved in pathophysiology such as atherogenesis. The protein is C-X-C motif chemokine 16 (Cxcl16) of Rattus norvegicus (Rat).